A 435-amino-acid chain; its full sequence is ATP-dependent protease ATPase subunit HslU (435 aa).

ATP is bound by residues I18, 60 to 65 (GVGKTE), D248, E313, and R385.

Belongs to the ClpX chaperone family. HslU subfamily. As to quaternary structure, a double ring-shaped homohexamer of HslV is capped on each side by a ring-shaped HslU homohexamer. The assembly of the HslU/HslV complex is dependent on binding of ATP.

It is found in the cytoplasm. Functionally, ATPase subunit of a proteasome-like degradation complex; this subunit has chaperone activity. The binding of ATP and its subsequent hydrolysis by HslU are essential for unfolding of protein substrates subsequently hydrolyzed by HslV. HslU recognizes the N-terminal part of its protein substrates and unfolds these before they are guided to HslV for hydrolysis. This is ATP-dependent protease ATPase subunit HslU from Agrobacterium fabrum (strain C58 / ATCC 33970) (Agrobacterium tumefaciens (strain C58)).